Reading from the N-terminus, the 93-residue chain is Small ribosomal subunit protein uS19 (93 aa).

It belongs to the universal ribosomal protein uS19 family.

Its function is as follows. Protein S19 forms a complex with S13 that binds strongly to the 16S ribosomal RNA. This chain is Small ribosomal subunit protein uS19, found in Rhodococcus erythropolis (strain PR4 / NBRC 100887).